The primary structure comprises 154 residues: Ribosome maturation factor RimP (154 aa).

Belongs to the RimP family.

The protein resides in the cytoplasm. Required for maturation of 30S ribosomal subunits. This Natranaerobius thermophilus (strain ATCC BAA-1301 / DSM 18059 / JW/NM-WN-LF) protein is Ribosome maturation factor RimP.